We begin with the raw amino-acid sequence, 151 residues long: UPF0208 membrane protein NT01EI_2692 (151 aa).

Transmembrane regions (helical) follow at residues 46-65 and 69-91; these read FAIRFMPPIAMFTLCWQIAL and LGPAIATALFACSLPMQGLWWLG.

The protein belongs to the UPF0208 family.

The protein resides in the cell inner membrane. This chain is UPF0208 membrane protein NT01EI_2692, found in Edwardsiella ictaluri (strain 93-146).